Reading from the N-terminus, the 411-residue chain is Putative polysaccharide ligase RC0486 (411 aa).

Helical transmembrane passes span L15–F35, G78–I98, L101–A121, L133–F153, M166–L186, I207–T227, I233–A253, I328–Y348, N361–Y381, and I383–V403.

It belongs to the O-antigen ligase family.

The protein resides in the membrane. This is Putative polysaccharide ligase RC0486 from Rickettsia conorii (strain ATCC VR-613 / Malish 7).